Consider the following 643-residue polypeptide: 1-deoxy-D-xylulose-5-phosphate synthase (643 aa).

Thiamine diphosphate contacts are provided by residues His-89 and Gly-130–Ser-132. Asp-161 provides a ligand contact to Mg(2+). Thiamine diphosphate-binding positions include Gly-162–Ala-163, Asn-190, Phe-297, and Glu-380. Asn-190 lines the Mg(2+) pocket.

Belongs to the transketolase family. DXPS subfamily. In terms of assembly, homodimer. Mg(2+) is required as a cofactor. Thiamine diphosphate serves as cofactor.

The enzyme catalyses D-glyceraldehyde 3-phosphate + pyruvate + H(+) = 1-deoxy-D-xylulose 5-phosphate + CO2. It functions in the pathway metabolic intermediate biosynthesis; 1-deoxy-D-xylulose 5-phosphate biosynthesis; 1-deoxy-D-xylulose 5-phosphate from D-glyceraldehyde 3-phosphate and pyruvate: step 1/1. Its function is as follows. Catalyzes the acyloin condensation reaction between C atoms 2 and 3 of pyruvate and glyceraldehyde 3-phosphate to yield 1-deoxy-D-xylulose-5-phosphate (DXP). The protein is 1-deoxy-D-xylulose-5-phosphate synthase of Hahella chejuensis (strain KCTC 2396).